The primary structure comprises 276 residues: Aldo-keto reductase Mjls_1919 (276 aa).

The active-site Proton donor is the Y50. NADPH contacts are provided by L190, I228, K230, S231, V232, R236, S239, and N240.

Belongs to the aldo/keto reductase family.

The polypeptide is Aldo-keto reductase Mjls_1919 (Mycobacterium sp. (strain JLS)).